We begin with the raw amino-acid sequence, 259 residues long: Glandular kallikrein-10 (259 aa).

The first 18 residues, 1-18 (MWFLILFLALSLGGIDAA), serve as a signal peptide directing secretion. A propeptide spans 19–24 (PPGQSR) (activation peptide). The region spanning 25-256 (IVGGYKCEKN…FTSWIKEVMK (232 aa)) is the Peptidase S1 domain. 5 disulfides stabilise this stretch: Cys-31–Cys-171, Cys-48–Cys-64, Cys-150–Cys-217, Cys-182–Cys-196, and Cys-207–Cys-232. His-63 serves as the catalytic Charge relay system. N-linked (GlcNAc...) asparagine glycosylation is found at Asn-91 and Asn-106. The active-site Charge relay system is the Asp-118. Ser-211 serves as the catalytic Charge relay system.

This sequence belongs to the peptidase S1 family. Kallikrein subfamily. In terms of assembly, heterodimer of a light chain and heavy chain linked by a disulfide bond. Post-translationally, probably N- and O-glycosylated. Kidney and submandibular gland, where it is found in the granular convoluted tubule and striated duct cells. It is likely that the enzyme is mainly synthesized in the granular convoluted tubules and then transferred to other tissues by release into the vasculature or interstitial space.

It carries out the reaction Preferential cleavage of Arg-|-Xaa bonds in small molecule substrates. Highly selective action to release kallidin (lysyl-bradykinin) from kininogen involves hydrolysis of Met-|-Xaa or Leu-|-Xaa.. Glandular kallikreins cleave Met-Lys and Arg-Ser bonds in kininogen to release Lys-bradykinin. This protein may be involved in the regulation of renal function. The polypeptide is Glandular kallikrein-10 (Klk10) (Rattus norvegicus (Rat)).